The primary structure comprises 440 residues: uncharacterized protein (440 aa).

The next 10 membrane-spanning stretches (helical) occupy residues 26-46 (NGLI…SSTF), 59-79 (FVFW…NGVL), 96-116 (FFLG…LKLK), 138-158 (LTLS…SIYL), 211-231 (FLVF…YLFA), 241-261 (LRKP…VGII), 263-283 (WIII…FVIF), 284-304 (WVIK…SLTI), 394-414 (FLII…SVFI), and 418-438 (IVQI…FTFI).

It to M.pneumoniae MPN_087.

It is found in the cell membrane. This is an uncharacterized protein from Mycoplasma pneumoniae (strain ATCC 29342 / M129 / Subtype 1) (Mycoplasmoides pneumoniae).